A 321-amino-acid polypeptide reads, in one-letter code: Glucokinase (321 aa).

8-13 (GDVGGT) serves as a coordination point for ATP.

The protein belongs to the bacterial glucokinase family.

It localises to the cytoplasm. It catalyses the reaction D-glucose + ATP = D-glucose 6-phosphate + ADP + H(+). The chain is Glucokinase from Escherichia fergusonii (strain ATCC 35469 / DSM 13698 / CCUG 18766 / IAM 14443 / JCM 21226 / LMG 7866 / NBRC 102419 / NCTC 12128 / CDC 0568-73).